We begin with the raw amino-acid sequence, 179 residues long: uncharacterized protein (179 aa).

The disordered stretch occupies residues 160–179; sequence QPIEPNGTQPATETKTPVGV. The segment covering 165–179 has biased composition (polar residues); it reads NGTQPATETKTPVGV.

The protein belongs to the Dps family.

This is an uncharacterized protein from Anabaena variabilis.